Reading from the N-terminus, the 154-residue chain is MHCPFCGANDTKVIDSRLVAEGEQVRRRRECLACGERFTTFETAELVLPRLIKTDGSRQPFDEEKLRAGMQRALEKRPVSVERLESSLVHIKHKLRATGEREVKSLVVGELVMAELQKLDEVAYIRFASVYRRFQDLNEFREEIDRLAREPVKE.

Residues 3 to 34 (CPFCGANDTKVIDSRLVAEGEQVRRRRECLAC) fold into a zinc finger. The 91-residue stretch at 49 to 139 (PRLIKTDGSR…VYRRFQDLNE (91 aa)) folds into the ATP-cone domain.

It belongs to the NrdR family. Zn(2+) serves as cofactor.

Functionally, negatively regulates transcription of bacterial ribonucleotide reductase nrd genes and operons by binding to NrdR-boxes. The polypeptide is Transcriptional repressor NrdR (Pseudomonas fluorescens (strain Pf0-1)).